Reading from the N-terminus, the 399-residue chain is Nuclear hormone receptor family member nhr-125 (399 aa).

Positions 10 to 80 (PFSCRICNQK…MGMDTTKFQY (71 aa)) form a DNA-binding region, nuclear receptor. 2 consecutive NR C4-type zinc fingers follow at residues 13–33 (CRIC…CRAC) and 50–63 (CQKG…CKRC). The NR LBD domain occupies 149–392 (QLENLTEGFK…EKLQKSQFSI (244 aa)).

This sequence belongs to the nuclear hormone receptor family.

The protein localises to the nucleus. Its function is as follows. Orphan nuclear receptor. This chain is Nuclear hormone receptor family member nhr-125 (nhr-125), found in Caenorhabditis elegans.